We begin with the raw amino-acid sequence, 432 residues long: Leucine-rich repeat-containing protein ODA7 (432 aa).

5 LRR repeats span residues 47-68, 69-90, 91-112, 113-134, and 138-159; these read NLKA…PPLA, DLKC…EAVP, GLDT…ACCP, ALRT…AHLA, and ALQT…DILK. One can recognise an LRRCT domain in the interval 173 to 211; it reads PVVSNIKNYRKVLVTSIPSLTYLDDRPVFDNERKIAQAW. Positions 212–243 form a coiled coil; the sequence is LEGGLEGERAMRNQLKEEEEERSRKNHEFMMQ. Disordered regions lie at residues 297-332 and 368-432; these read RPGE…AAAE and EELD…NDLD. Low complexity-rich tracts occupy residues 323 to 332 and 407 to 425; these read GAWGSGAAAE and VAAA…ISAA.

The protein belongs to the DNAAF1 family. In terms of assembly, interacts with both outer row and I1 inner row dyneins.

Its subcellular location is the cytoplasm. It is found in the cytoskeleton. The protein resides in the cilium axoneme. Functionally, cilium-specific protein required for cilia structures. Axonemal dynein-associated protein that participates in a structural link between inner and outer row dyneins. This Chlamydomonas reinhardtii (Chlamydomonas smithii) protein is Leucine-rich repeat-containing protein ODA7 (ODA7).